An 82-amino-acid polypeptide reads, in one-letter code: Small ribosomal subunit protein uS17 (82 aa).

It belongs to the universal ribosomal protein uS17 family. As to quaternary structure, part of the 30S ribosomal subunit.

Functionally, one of the primary rRNA binding proteins, it binds specifically to the 5'-end of 16S ribosomal RNA. In Shewanella sediminis (strain HAW-EB3), this protein is Small ribosomal subunit protein uS17.